We begin with the raw amino-acid sequence, 300 residues long: Protein p34 (300 aa).

Helical transmembrane passes span 14-34 (YLSV…WVVT), 39-59 (ILAS…NLVA), 87-107 (SIFF…SLFI), 119-139 (IIMY…TYVI), and 170-190 (LSDY…LYIF).

It belongs to the cation diffusion facilitator (CDF) transporter (TC 2.A.4) family.

Its subcellular location is the cell membrane. The sequence is that of Protein p34 (p34) from Rickettsia prowazekii (strain Madrid E).